The chain runs to 891 residues: DNA mismatch repair protein MutS (891 aa).

An ATP-binding site is contributed by 639-646 (GPNMAGKS). A disordered region spans residues 827-854 (TIQEARPSAQGSEEKTPSSPAEKGLSLF).

It belongs to the DNA mismatch repair MutS family.

In terms of biological role, this protein is involved in the repair of mismatches in DNA. It is possible that it carries out the mismatch recognition step. This protein has a weak ATPase activity. This is DNA mismatch repair protein MutS from Treponema denticola (strain ATCC 35405 / DSM 14222 / CIP 103919 / JCM 8153 / KCTC 15104).